Reading from the N-terminus, the 228-residue chain is Orotidine 5'-phosphate decarboxylase (228 aa).

Substrate contacts are provided by residues Asp8, Lys30, 59-68 (DLKLHDIPNT), Thr118, Arg178, Gln187, Gly207, and Arg208. Catalysis depends on Lys61, which acts as the Proton donor.

It belongs to the OMP decarboxylase family. Type 1 subfamily. In terms of assembly, homodimer.

The enzyme catalyses orotidine 5'-phosphate + H(+) = UMP + CO2. Its pathway is pyrimidine metabolism; UMP biosynthesis via de novo pathway; UMP from orotate: step 2/2. In terms of biological role, catalyzes the decarboxylation of orotidine 5'-monophosphate (OMP) to uridine 5'-monophosphate (UMP). This Wolinella succinogenes (strain ATCC 29543 / DSM 1740 / CCUG 13145 / JCM 31913 / LMG 7466 / NCTC 11488 / FDC 602W) (Vibrio succinogenes) protein is Orotidine 5'-phosphate decarboxylase.